Consider the following 515-residue polypeptide: Serine/threonine-protein kinase STE7 (515 aa).

The 276-residue stretch at 191 to 466 (LVQLGKIGAG…IHELLHHDLI (276 aa)) folds into the Protein kinase domain. Residues 197–205 (IGAGNSGTV) and lysine 220 contribute to the ATP site. Aspartate 331 acts as the Proton acceptor in catalysis. Serine 359 carries the phosphoserine modification. At threonine 363 the chain carries Phosphothreonine.

It belongs to the protein kinase superfamily. STE Ser/Thr protein kinase family. MAP kinase kinase subfamily.

It carries out the reaction L-seryl-[protein] + ATP = O-phospho-L-seryl-[protein] + ADP + H(+). It catalyses the reaction L-threonyl-[protein] + ATP = O-phospho-L-threonyl-[protein] + ADP + H(+). The enzyme catalyses L-tyrosyl-[protein] + ATP = O-phospho-L-tyrosyl-[protein] + ADP + H(+). With respect to regulation, phosphorylated at multiple sites in response to pheromone. Serine/threonine protein kinase required for cell-type-specific transcription and signal transduction in yeast. It is thought that it is phosphorylated by the ste11 protein kinase and that it can phosphorylate the FUS3 and or KSS1 kinases. This is Serine/threonine-protein kinase STE7 (STE7) from Saccharomyces cerevisiae (strain ATCC 204508 / S288c) (Baker's yeast).